We begin with the raw amino-acid sequence, 174 residues long: Crossover junction endodeoxyribonuclease RuvC (174 aa).

Catalysis depends on residues Asp8, Glu67, and Asp139. Positions 8, 67, and 139 each coordinate Mg(2+).

Belongs to the RuvC family. Homodimer which binds Holliday junction (HJ) DNA. The HJ becomes 2-fold symmetrical on binding to RuvC with unstacked arms; it has a different conformation from HJ DNA in complex with RuvA. In the full resolvosome a probable DNA-RuvA(4)-RuvB(12)-RuvC(2) complex forms which resolves the HJ. Mg(2+) is required as a cofactor.

Its subcellular location is the cytoplasm. The catalysed reaction is Endonucleolytic cleavage at a junction such as a reciprocal single-stranded crossover between two homologous DNA duplexes (Holliday junction).. Its function is as follows. The RuvA-RuvB-RuvC complex processes Holliday junction (HJ) DNA during genetic recombination and DNA repair. Endonuclease that resolves HJ intermediates. Cleaves cruciform DNA by making single-stranded nicks across the HJ at symmetrical positions within the homologous arms, yielding a 5'-phosphate and a 3'-hydroxyl group; requires a central core of homology in the junction. The consensus cleavage sequence is 5'-(A/T)TT(C/G)-3'. Cleavage occurs on the 3'-side of the TT dinucleotide at the point of strand exchange. HJ branch migration catalyzed by RuvA-RuvB allows RuvC to scan DNA until it finds its consensus sequence, where it cleaves and resolves the cruciform DNA. The sequence is that of Crossover junction endodeoxyribonuclease RuvC from Pseudoalteromonas translucida (strain TAC 125).